The chain runs to 209 residues: Potassium-transporting ATPase KdpC subunit (209 aa).

A helical membrane pass occupies residues 11–31 (MILALTVLTGLAYPLAVTAVA). Residues 188–209 (AQAPTPRQPEPGHPEPGRPEVR) are disordered. Positions 197–209 (EPGHPEPGRPEVR) are enriched in basic and acidic residues.

The protein belongs to the KdpC family. The system is composed of three essential subunits: KdpA, KdpB and KdpC.

Its subcellular location is the cell inner membrane. Part of the high-affinity ATP-driven potassium transport (or Kdp) system, which catalyzes the hydrolysis of ATP coupled with the electrogenic transport of potassium into the cytoplasm. This subunit acts as a catalytic chaperone that increases the ATP-binding affinity of the ATP-hydrolyzing subunit KdpB by the formation of a transient KdpB/KdpC/ATP ternary complex. This Rhodospirillum centenum (strain ATCC 51521 / SW) protein is Potassium-transporting ATPase KdpC subunit.